The sequence spans 270 residues: Ribosomal RNA small subunit methyltransferase A (270 aa).

Residues Asn18, Leu20, Gly45, Glu66, Asp91, and Asn112 each contribute to the S-adenosyl-L-methionine site.

The protein belongs to the class I-like SAM-binding methyltransferase superfamily. rRNA adenine N(6)-methyltransferase family. RsmA subfamily.

The protein localises to the cytoplasm. It carries out the reaction adenosine(1518)/adenosine(1519) in 16S rRNA + 4 S-adenosyl-L-methionine = N(6)-dimethyladenosine(1518)/N(6)-dimethyladenosine(1519) in 16S rRNA + 4 S-adenosyl-L-homocysteine + 4 H(+). Functionally, specifically dimethylates two adjacent adenosines (A1518 and A1519) in the loop of a conserved hairpin near the 3'-end of 16S rRNA in the 30S particle. May play a critical role in biogenesis of 30S subunits. This is Ribosomal RNA small subunit methyltransferase A from Psychromonas ingrahamii (strain DSM 17664 / CCUG 51855 / 37).